The primary structure comprises 418 residues: Histidinol dehydrogenase (418 aa).

NAD(+) contacts are provided by Y119, Q180, and N203. T226, Q248, and H251 together coordinate substrate. Zn(2+) contacts are provided by Q248 and H251. Catalysis depends on proton acceptor residues E316 and H317. Substrate-binding residues include H317, D350, E404, and H409. A Zn(2+)-binding site is contributed by D350. Zn(2+) is bound at residue H409.

This sequence belongs to the histidinol dehydrogenase family. Zn(2+) is required as a cofactor.

The enzyme catalyses L-histidinol + 2 NAD(+) + H2O = L-histidine + 2 NADH + 3 H(+). The protein operates within amino-acid biosynthesis; L-histidine biosynthesis; L-histidine from 5-phospho-alpha-D-ribose 1-diphosphate: step 9/9. Functionally, catalyzes the sequential NAD-dependent oxidations of L-histidinol to L-histidinaldehyde and then to L-histidine. This Staphylococcus aureus (strain MSSA476) protein is Histidinol dehydrogenase.